The chain runs to 300 residues: Cytochrome f (300 aa).

The signal sequence occupies residues 1-32 (MMTYLSKQFSKLLFGQLLFLFIGNLLLKPVQA). Tyr33, Cys53, Cys56, and His57 together coordinate heme. Residues 267 to 287 (LKTFIAFCVTVFIGQLAFVLK) traverse the membrane as a helical segment.

Belongs to the cytochrome f family. As to quaternary structure, the 4 large subunits of the cytochrome b6-f complex are cytochrome b6, subunit IV (17 kDa polypeptide, petD), cytochrome f and the Rieske protein, while the 4 small subunits are PetG, PetL, PetM and PetN. The complex functions as a dimer. Heme serves as cofactor.

It localises to the plastid. The protein localises to the chloroplast thylakoid membrane. Component of the cytochrome b6-f complex, which mediates electron transfer between photosystem II (PSII) and photosystem I (PSI), cyclic electron flow around PSI, and state transitions. The protein is Cytochrome f of Cyanidioschyzon merolae (strain NIES-3377 / 10D) (Unicellular red alga).